The following is a 248-amino-acid chain: 3-deoxy-manno-octulosonate cytidylyltransferase (248 aa).

This sequence belongs to the KdsB family.

The protein localises to the cytoplasm. It carries out the reaction 3-deoxy-alpha-D-manno-oct-2-ulosonate + CTP = CMP-3-deoxy-beta-D-manno-octulosonate + diphosphate. It participates in nucleotide-sugar biosynthesis; CMP-3-deoxy-D-manno-octulosonate biosynthesis; CMP-3-deoxy-D-manno-octulosonate from 3-deoxy-D-manno-octulosonate and CTP: step 1/1. It functions in the pathway bacterial outer membrane biogenesis; lipopolysaccharide biosynthesis. In terms of biological role, activates KDO (a required 8-carbon sugar) for incorporation into bacterial lipopolysaccharide in Gram-negative bacteria. This Escherichia coli O6:H1 (strain CFT073 / ATCC 700928 / UPEC) protein is 3-deoxy-manno-octulosonate cytidylyltransferase.